Reading from the N-terminus, the 648-residue chain is MPQNCIAPRPEEDGGVMVQGLPDMSDTQSKSVLAFPTITSQPGLQMSMYPITLKFEEVVYKVKIEQTSQCMGSWKSKEKTILNGITGMVCPGEFLAMLGPSGSGKTTLLSALGGRLSKTFSGKVMYNGQPFSGCIKRRTGFVAQDDVLYPHLTVWETLFFTALLRLPSSLTRDEKAEHVDRVIAELGLNRCTNSMIGGPLFRGISGGEKKRVSIGQEMLINPSLLLLDEPTSGLDSTTAHRIVTTIKRLASGGRTVVTTIHQPSSRIYHMFDKVVLLSEGSPIYYGAASSAVEYFSSLGFSTSLTVNPADLLLDLANGIPPDTQKETSEQEQKTVKETLVSAYEKNISTKLKAELCNAESHSYEYTKAAAKNLKSEQWCTTWWYQFTVLLQRGVRERRFESFNKLRIFQVISVAFLGGLLWWHTPKSHIQDRTALLFFFSVFWGFYPLYNAVFTFPQEKRMLIKERSSGMYRLSSYFMARNVGDLPLELALPTAFVFIIYWMGGLKPDPTTFILSLLVVLYSVLVAQGLGLAFGALLMNIKQATTLASVTTLVFLIAGGYYVQQIPPFIVWLKYLSYSYYCYKLLLGIQYTDDDYYECSKGVWCRVGDFPAIKSMGLNNLWIDVFVMGVMLVGYRLMAYMALHRVKLR.

The ABC transporter domain maps to 53-304 (LKFEEVVYKV…FSSLGFSTSL (252 aa)). 99–106 (GPSGSGKT) is a binding site for ATP. A glycan (N-linked (GlcNAc...) asparagine) is linked at asparagine 346. The ABC transmembrane type-2 domain occupies 384-590 (YQFTVLLQRG…CYKLLLGIQY (207 aa)). 7 helical membrane passes run 405 to 425 (LRIFQVISVAFLGGLLWWHTP), 435 to 455 (LLFFFSVFWGFYPLYNAVFTF), 485 to 505 (LPLELALPTAFVFIIYWMGGL), 512 to 532 (FILSLLVVLYSVLVAQGLGLA), 543 to 562 (ATTLASVTTLVFLIAGGYYV), 569 to 591 (IVWLKYLSYSYYCYKLLLGIQYT), and 620 to 640 (LWIDVFVMGVMLVGYRLMAYM).

The protein belongs to the ABC transporter superfamily. ABCG family. Eye pigment precursor importer (TC 3.A.1.204) subfamily. In terms of assembly, forms heterodimers with ABCG11. Accumulates primarily in the pericycle and stelar cells of roots. Expressed in leaves, stems, flowers and siliques, and, at low levels, in roots. Accumulates in the phloem.

It is found in the cell membrane. Its function is as follows. Positive regulator of plant growth which acts as an efflux pump involved in the major root-to-shoot (acropetal) long-distance cytokinin (CK) transport via the xylem sap. Together with ABCG9 and ABCG11, required for vascular development by regulating lipid/sterol homeostasis. Involved in CK-dependent responses to oxidative stress such as hydrogen peroxide H(2)O(2). Functionally, (Microbial infection) Required for SNC1-mediated defense response against the virulent pathogen Pseudomonas syringae pv. tomato DC3000 by promoting the accumulation of trans-zeatin (tZ)-type cytokinins (CK) in the shoot. The polypeptide is ABC transporter G family member 14 (Arabidopsis thaliana (Mouse-ear cress)).